The following is a 619-amino-acid chain: 2-succinyl-5-enolpyruvyl-6-hydroxy-3-cyclohexene-1-carboxylate synthase (619 aa).

Residues 385-398 are compositionally biased toward polar residues; sequence SSAHQSLAATNSDS. Residues 385–415 are disordered; it reads SSAHQSLAATNSDSSTDDIIENTDEEGSNES. A compositionally biased stretch (acidic residues) spans 399 to 413; it reads STDDIIENTDEEGSN.

Belongs to the TPP enzyme family. MenD subfamily. As to quaternary structure, homodimer. The cofactor is Mg(2+). Mn(2+) is required as a cofactor. It depends on thiamine diphosphate as a cofactor.

The catalysed reaction is isochorismate + 2-oxoglutarate + H(+) = 5-enolpyruvoyl-6-hydroxy-2-succinyl-cyclohex-3-ene-1-carboxylate + CO2. It participates in quinol/quinone metabolism; 1,4-dihydroxy-2-naphthoate biosynthesis; 1,4-dihydroxy-2-naphthoate from chorismate: step 2/7. It functions in the pathway quinol/quinone metabolism; menaquinone biosynthesis. Functionally, catalyzes the thiamine diphosphate-dependent decarboxylation of 2-oxoglutarate and the subsequent addition of the resulting succinic semialdehyde-thiamine pyrophosphate anion to isochorismate to yield 2-succinyl-5-enolpyruvyl-6-hydroxy-3-cyclohexene-1-carboxylate (SEPHCHC). The chain is 2-succinyl-5-enolpyruvyl-6-hydroxy-3-cyclohexene-1-carboxylate synthase from Haloquadratum walsbyi (strain DSM 16790 / HBSQ001).